Consider the following 614-residue polypeptide: Lamin-2 (614 aa).

Positions 1 to 10 (MSAQVSKKRG) are enriched in basic residues. The disordered stretch occupies residues 1 to 51 (MSAQVSKKRGGSNPPKTGQHAASSTTSRTESSATSQTIYERQEVETRTQRT). The tract at residues 1–76 (MSAQVSKKRG…GTAGLAGSPL (76 aa)) is head. Residues 21–37 (AASSTTSRTESSATSQT) are compositionally biased toward low complexity. The coil 1A stretch occupies residues 77 to 117 (SRHQEKEEFKLLNNRFANYIDTIRAQQEEISVLRRKVETVS). The IF rod domain maps to 81-433 (EKEEFKLLNN…ALLRTEEERL (353 aa)). The interval 118 to 128 (SKEVVENQKIK) is linker 1. Positions 129–268 (ERYNLEIANL…EEIVSLRNQR (140 aa)) are coil 1B. Residues 269–286 (RTEITEVETRMGEEYQSK) form a linker 2 region. The tract at residues 287–426 (IVEQLNDLRA…AELATYNALL (140 aa)) is coil 2. The tract at residues 427 to 611 (RTEEERLNMK…ADSSDHQKNC (185 aa)) is tail. Residues 433 to 454 (LNMKSPPFPSTPDSQRRGTKRR) form a disordered region. The Nuclear localization signal motif lies at 449-458 (RGTKRRIADS). The 120-residue stretch at 462-581 (TRFRNEASAT…VARREMTQSS (120 aa)) folds into the LTD domain. Cysteine 611 carries the S-farnesyl cysteine lipid modification. Residues 612-614 (VIM) constitute a propeptide, removed in mature form.

Belongs to the intermediate filament family.

Its subcellular location is the nucleus inner membrane. Intermediate filament (IF) protein, component of the nuclear lamina, a fibrous layer on the nucleoplasmic side of the inner nuclear membrane, which is thought to provide a framework for the nuclear envelope. The polypeptide is Lamin-2 (Hypsibius exemplaris (Freshwater tardigrade)).